The chain runs to 641 residues: Homeobox protein ceh-38 (641 aa).

2 stretches are compositionally biased toward polar residues: residues methionine 1–threonine 14 and aspartate 28–glycine 38. Disordered stretches follow at residues methionine 1–alanine 79 and leucine 129–methionine 244. The span at threonine 52–alanine 79 shows a compositional bias: low complexity. A compositionally biased stretch (basic and acidic residues) spans valine 131 to aspartate 140. Composition is skewed to polar residues over residues threonine 167 to leucine 183 and asparagine 190 to serine 204. The segment at residues asparagine 308–threonine 394 is a DNA-binding region (CUT). 3 disordered regions span residues asparagine 398–lysine 428, glycine 485–threonine 508, and phenylalanine 552–asparagine 641. Positions serine 427 to glycine 486 form a DNA-binding region, homeobox. Acidic residues predominate over residues histidine 571–alanine 604. Over residues lysine 613–glutamate 626 the composition is skewed to basic and acidic residues.

The protein belongs to the CUT homeobox family. As to expression, expressed in the embryo. After gastrulation, expressed in almost all cells. During larval and adult stages, expressed in the dorsal and ventral nerve cord, head and tail neurons, pharynx, gut and head.

It is found in the nucleus. In terms of biological role, probable DNA-binding regulatory protein involved in cell-fate specification. The sequence is that of Homeobox protein ceh-38 (ceh-38) from Caenorhabditis elegans.